The chain runs to 37 residues: Large ribosomal subunit protein bL36 (37 aa).

It belongs to the bacterial ribosomal protein bL36 family.

The polypeptide is Large ribosomal subunit protein bL36 (Gloeothece citriformis (strain PCC 7424) (Cyanothece sp. (strain PCC 7424))).